The primary structure comprises 216 residues: Ribose-5-phosphate isomerase A (216 aa).

Substrate-binding positions include 26–29, 79–82, and 92–95; these read TGST, DGAD, and KGGG. Residue Glu-101 is the Proton acceptor of the active site. Lys-119 provides a ligand contact to substrate.

Belongs to the ribose 5-phosphate isomerase family. As to quaternary structure, homodimer.

It carries out the reaction aldehydo-D-ribose 5-phosphate = D-ribulose 5-phosphate. It functions in the pathway carbohydrate degradation; pentose phosphate pathway; D-ribose 5-phosphate from D-ribulose 5-phosphate (non-oxidative stage): step 1/1. Catalyzes the reversible conversion of ribose-5-phosphate to ribulose 5-phosphate. The polypeptide is Ribose-5-phosphate isomerase A (Legionella pneumophila (strain Corby)).